The sequence spans 381 residues: Putative F-box protein At3g17500 (381 aa).

Residues 1–45 form the F-box domain; the sequence is MMSNLPLDLVEEILSRVPATSLKRLRSTCKSWNNCYKDQRFTEKH.

This Arabidopsis thaliana (Mouse-ear cress) protein is Putative F-box protein At3g17500.